A 506-amino-acid chain; its full sequence is Protein nucleotidyltransferase YdiU (506 aa).

The ATP site is built by Gly95, Gly97, Arg98, Lys118, Asp130, Gly131, Arg181, and Arg188. Residue Asp257 is the Proton acceptor of the active site. Residues Asn258 and Asp267 each coordinate Mg(2+). Asp267 lines the ATP pocket. Positions 487-506 are disordered; the sequence is KHYQDAPTPDQRVKQTFCGT.

It belongs to the SELO family. Requires Mg(2+) as cofactor. Mn(2+) is required as a cofactor.

The enzyme catalyses L-seryl-[protein] + ATP = 3-O-(5'-adenylyl)-L-seryl-[protein] + diphosphate. It carries out the reaction L-threonyl-[protein] + ATP = 3-O-(5'-adenylyl)-L-threonyl-[protein] + diphosphate. It catalyses the reaction L-tyrosyl-[protein] + ATP = O-(5'-adenylyl)-L-tyrosyl-[protein] + diphosphate. The catalysed reaction is L-histidyl-[protein] + UTP = N(tele)-(5'-uridylyl)-L-histidyl-[protein] + diphosphate. The enzyme catalyses L-seryl-[protein] + UTP = O-(5'-uridylyl)-L-seryl-[protein] + diphosphate. It carries out the reaction L-tyrosyl-[protein] + UTP = O-(5'-uridylyl)-L-tyrosyl-[protein] + diphosphate. Nucleotidyltransferase involved in the post-translational modification of proteins. It can catalyze the addition of adenosine monophosphate (AMP) or uridine monophosphate (UMP) to a protein, resulting in modifications known as AMPylation and UMPylation. The sequence is that of Protein nucleotidyltransferase YdiU from Shewanella denitrificans (strain OS217 / ATCC BAA-1090 / DSM 15013).